Reading from the N-terminus, the 377-residue chain is Apelin receptor (377 aa).

The Extracellular portion of the chain corresponds to 1–28; sequence MEDDGYNYYGADNQSECDYADWTPSGAL. A glycan (N-linked (GlcNAc...) asparagine) is linked at asparagine 13. 2 disulfide bridges follow: cysteine 17–cysteine 279 and cysteine 100–cysteine 179. Residues 29–52 form a helical membrane-spanning segment; it reads IPAIYILVFLLGTTGNGLVLWTVF. Residues 53–62 lie on the Cytoplasmic side of the membrane; the sequence is WSSREKRRSA. The chain crosses the membrane as a helical span at residues 63 to 84; the sequence is DIFIASLAVADLTFVVTLPLWA. Residues 85 to 97 are Extracellular-facing; the sequence is TYTYREFDWPFGT. Residues 98 to 123 form a helical membrane-spanning segment; that stretch reads FSCKLSSYLIFVNMYASVFCLTGLSF. Residues 124–144 lie on the Cytoplasmic side of the membrane; sequence DRYLAIVRPVANARLRLRVSG. Residues 145–162 form a helical membrane-spanning segment; the sequence is AVATAVLWVLAALLAVPV. At 163-196 the chain is on the extracellular side; it reads MVFRSTDIPENSTKTQCYMDYSMVATSNSEWAWE. Asparagine 173 carries N-linked (GlcNAc...) asparagine glycosylation. Residues 197–221 traverse the membrane as a helical segment; it reads VGLGVSSTAVGFVVPFIIMLTCYFF. At 222–244 the chain is on the cytoplasmic side; the sequence is IAQTIAGHFRKERIEGLRKRRRL. A helical membrane pass occupies residues 245-268; it reads LSIIVVLVVTFALCWMPYHLVKTL. Residues 269-287 lie on the Extracellular side of the membrane; the sequence is YMLGNLLHWPCDFDSFLMN. The chain crosses the membrane as a helical span at residues 288 to 310; that stretch reads VFPYCTCISYVNSCLNPFLYAFF. Over 311–377 the chain is Cytoplasmic; that stretch reads DPRFRRACTS…IPYSQETLVD (67 aa). Residues 335 to 349 show a composition bias toward low complexity; sequence SSSAEKSASYSSGHS. The segment at 335–377 is disordered; the sequence is SSSAEKSASYSSGHSQGPGPNMCKGGEPMHEKSIPYSQETLVD.

The protein belongs to the G-protein coupled receptor 1 family. Homodimer; dimerization inhibits APLNR-mediated G protein and beta-arrestin signaling pathways compared to monomeric APLNR. Widely expressed. Highest expression in the lung, lower in the heart, placenta, ovary, skeletal muscle, mammary gland, kidney and several structures in the brain as the hypothalamus (supraoptic and periventricular nuclei), pituitary, olfactory bulb and pineal gland.

The protein localises to the cell membrane. Functionally, g protein-coupled receptor for peptide hormones apelin (APLN) and apelin receptor early endogenous ligand (APELA/ELA), that plays a role in the regulation of normal cardiovascular function and fluid homeostasis. When acting as apelin receptor, activates both G(i) protein pathway that inhibits adenylate cyclase activity, and the beta-arrestin pathway that promotes internalization of the receptor. APLNR/APJ also functions as mechanoreceptor that is activated by pathological stimuli in a G-protein-independent fashion to induce beta-arrestin signaling, hence eliciting cardiac hypertrophy. However, the presence of apelin ligand blunts cardiac hypertrophic induction from APLNR/APJ on response to pathological stimuli. Plays a key role in early development such as gastrulation, blood vessels formation and heart morphogenesis by acting as a APELA receptor. May promote angioblast migration toward the embryonic midline, i.e. the position of the future vessel formation, during vasculogenesis. Promotes sinus venosus (SV)-derived endothelial cells migration into the developing heart to promote coronary blood vessel development. Also plays a role in various processes in adults such as regulation of blood vessel formation, blood pressure, heart contractility and heart failure. In Rattus norvegicus (Rat), this protein is Apelin receptor.